We begin with the raw amino-acid sequence, 325 residues long: MEQLRSHPRLVRKLQEALGDQLCVALDDSNVVEIMLNPDGKLFIERLGHGVAPAGEMSSAAAEMVIGTVAHALQSEVDTEQPIISGELPIGGHRFEGLLPPVVAKPSFTIRRRASRLIPLDDYVRSGVMTEAQAATIRSAIDSRLNIIISGGTASGKTTLANAVIHEIVRSAPEDRLVILEDTAEIQCAADNAVLLRTSDTVDMARLLKSTMRLRPDRIVVGEVRDGAALTLLKAWNTGHPGGVATIHSNTATSALRRLEQLTAEASQQPMHEVIGEVVDLIVSIERTPRGRRVRDIIQVERFANGRYEIESDQLTEEREERHVA.

Residue 151-158 participates in ATP binding; that stretch reads GGTASGKT.

The protein belongs to the GSP E family.

It is found in the cytoplasm. The polypeptide is Probable conjugal transfer protein TrbB (trbB) (Sinorhizobium fredii (strain NBRC 101917 / NGR234)).